Consider the following 435-residue polypeptide: Transcription factor gkaF (435 aa).

Residues M1–K19 are compositionally biased toward basic and acidic residues. 3 disordered regions span residues M1 to W40, S115 to S158, and F231 to P257. The span at P28 to W40 shows a compositional bias: polar residues. The span at S143–S158 shows a compositional bias: low complexity.

It localises to the nucleus. Its function is as follows. Transcription factor; part of the gene cluster that mediates the biosynthesis of GKK1032, fungal natural products containing a macrocyclic para-cyclophane connected to a decahydrofluorene ring system that show potent antitumor activities. This is Transcription factor gkaF from Penicillium citrinum.